The primary structure comprises 461 residues: Acetylcholine receptor subunit alpha (461 aa).

The signal sequence occupies residues 1–24 (MILCSYWHVGLVLLLFSCCGLVLG). Residues 25-234 (SEHETRLVAN…ITYHFIMQRI (210 aa)) are Extracellular-facing. 2 disulfide bridges follow: cysteine 152–cysteine 166 and cysteine 216–cysteine 217. An N-linked (GlcNAc...) asparagine glycan is attached at asparagine 165. 3 consecutive transmembrane segments (helical) span residues 235-259 (PLYF…VFYL), 267-285 (MTLS…LVIV), and 301-320 (YMLF…VVVI). Residues 321–432 (NTHHRSPSTH…WKYVAMVIDH (112 aa)) are Cytoplasmic-facing. The helical transmembrane segment at 433-451 (ILLCVFMLICIIGTVSVFA) threads the bilayer.

Belongs to the ligand-gated ion channel (TC 1.A.9) family. Acetylcholine receptor (TC 1.A.9.1) subfamily. Alpha-1/CHRNA1 sub-subfamily. As to quaternary structure, pentamer of two alpha chains, and one each of the beta, delta, and gamma chains.

The protein localises to the postsynaptic cell membrane. Its subcellular location is the cell membrane. The enzyme catalyses K(+)(in) = K(+)(out). It catalyses the reaction Na(+)(in) = Na(+)(out). Upon acetylcholine binding, the AChR responds by an extensive change in conformation that affects all subunits and leads to opening of an ion-conducting channel across the plasma membrane. This chain is Acetylcholine receptor subunit alpha (CHRNA1), found in Torpedo marmorata (Marbled electric ray).